The chain runs to 261 residues: tRNA pseudouridine synthase A (261 aa).

The active-site Nucleophile is the Asp-51. Residue Tyr-109 coordinates substrate.

The protein belongs to the tRNA pseudouridine synthase TruA family. As to quaternary structure, homodimer.

The catalysed reaction is uridine(38/39/40) in tRNA = pseudouridine(38/39/40) in tRNA. Functionally, formation of pseudouridine at positions 38, 39 and 40 in the anticodon stem and loop of transfer RNAs. The sequence is that of tRNA pseudouridine synthase A from Haemophilus ducreyi (strain 35000HP / ATCC 700724).